A 268-amino-acid chain; its full sequence is MPEGHTLHRLARLHQRRFAGAPVSVSSPQGRFADSASALNGRVLRRASAWGKHLFHHYVGGPVVHVHLGLYGTFTEWARPTDGWLPEPAGQVRMRMVGAEFGTDLRGPTVCESIDDGEVADVVARLGPDPLRSDANPSSAWSRITKSRRPIGALLMDQTVIAGVGNVYRNELLFRHRIDPQRPGRGIGEPEFDAAWNDLVSLMKVGLRRGKIIVVRPEHDHGLPSYLPDRPRTYVYRRAGEPCRVCGGVIRTALLEGRNVFWCPVCQT.

The active-site Schiff-base intermediate with DNA is P2. The active-site Proton donor is E3. The active-site Proton donor; for beta-elimination activity is the K52. DNA is bound by residues R125 and N166. The FPG-type zinc finger occupies 234–268; that stretch reads YVYRRAGEPCRVCGGVIRTALLEGRNVFWCPVCQT. Residue R258 is the Proton donor; for delta-elimination activity of the active site.

The protein belongs to the FPG family. Zn(2+) is required as a cofactor.

It catalyses the reaction 2'-deoxyribonucleotide-(2'-deoxyribose 5'-phosphate)-2'-deoxyribonucleotide-DNA = a 3'-end 2'-deoxyribonucleotide-(2,3-dehydro-2,3-deoxyribose 5'-phosphate)-DNA + a 5'-end 5'-phospho-2'-deoxyribonucleoside-DNA + H(+). Functionally, involved in base excision repair of DNA damaged by oxidation or by mutagenic agents. Acts as a DNA glycosylase that recognizes and removes damaged bases. Has AP (apurinic/apyrimidinic) lyase activity and introduces nicks in the DNA strand. Cleaves the DNA backbone by beta-delta elimination to generate a single-strand break at the site of the removed base with both 3'- and 5'-phosphates. The polypeptide is Endonuclease 8 1 (nei1) (Mycobacterium bovis (strain ATCC BAA-935 / AF2122/97)).